A 124-amino-acid chain; its full sequence is Mitochondrial import inner membrane translocase subunit TIM16 (124 aa).

Residues glutamate 58–glutamine 109 form a J-like region. The residue at position 69 (serine 69) is a Phosphoserine.

It belongs to the TIM16/PAM16 family. As to quaternary structure, probable component of the PAM complex at least composed of a mitochondrial HSP70 protein, GRPEL1 or GRPEL2, TIMM44, TIMM16/PAM16 and TIMM14/DNAJC19. Interacts with DNAJC19. Directly interacts with DNAJC15; this interaction counteracts DNAJC15-dependent stimulation of HSPA9 ATPase activity. Associates with the TIM23 complex.

It is found in the mitochondrion inner membrane. In terms of biological role, regulates ATP-dependent protein translocation into the mitochondrial matrix. Inhibits DNAJC19 stimulation of HSPA9/Mortalin ATPase activity. The chain is Mitochondrial import inner membrane translocase subunit TIM16 (Magmas-ps1) from Rattus norvegicus (Rat).